The sequence spans 548 residues: Chaperonin GroEL (548 aa).

ATP contacts are provided by residues 29–32, Lys-50, 86–90, Gly-414, 478–480, and Asp-494; these read TLGP, DGTTT, and NAA.

Belongs to the chaperonin (HSP60) family. Forms a cylinder of 14 subunits composed of two heptameric rings stacked back-to-back. Interacts with the co-chaperonin GroES.

Its subcellular location is the cytoplasm. The catalysed reaction is ATP + H2O + a folded polypeptide = ADP + phosphate + an unfolded polypeptide.. In terms of biological role, together with its co-chaperonin GroES, plays an essential role in assisting protein folding. The GroEL-GroES system forms a nano-cage that allows encapsulation of the non-native substrate proteins and provides a physical environment optimized to promote and accelerate protein folding. The chain is Chaperonin GroEL from Psychrobacter sp. (strain PRwf-1).